The sequence spans 312 residues: Protein dif-1 (312 aa).

Solcar repeat units lie at residues 2–93 (SDVL…GKWL), 102–193 (MTFI…LKKK), and 203–289 (LSPG…TLAA). The next 6 membrane-spanning stretches (helical) occupy residues 5–25 (LLNFIAGGVGGSCTVIVGHPF), 69–89 (MAAPLVGVSPLFAVFFGGCAV), 104–124 (FIQNANAGALAGVFTTIVMVP), 172–192 (TLLRDIPASAAYLSVYEYLKK), 209–229 (LMAGGLAGIANWGVCIPADVL), and 261–282 (LFKGFWPVMLRAFPANAACFFG).

This sequence belongs to the mitochondrial carrier (TC 2.A.29) family.

The protein resides in the mitochondrion inner membrane. Its function is as follows. Seems to play a role in the maintenance of tissue differentiation in the developing embryo, but not for its initiation. The sequence is that of Protein dif-1 (dif-1) from Caenorhabditis elegans.